A 682-amino-acid chain; its full sequence is Transcription factor 12 (682 aa).

A 9aaTAD motif is present at residues 19–27; that stretch reads DLLDFSAMF. Disordered regions lie at residues 25–122, 140–219, and 281–313; these read AMFS…LYSR, LGSP…PPTS, and SVSP…ASHT. 2 stretches are compositionally biased toward polar residues: residues 30 to 48 and 56 to 76; these read PVNS…QFSG and GTTS…SRGF. Residues serine 47, serine 67, and serine 79 each carry the phosphoserine modification. Residues 81–93 show a composition bias toward basic and acidic residues; the sequence is HYSDHLNDSRLGA. Phosphoserine is present on serine 98. Polar residues-rich tracts occupy residues 101–121 and 144–163; these read PFMN…SLYS and AQLS…SATS. Residue lysine 110 forms a Glycyl lysine isopeptide (Lys-Gly) (interchain with G-Cter in SUMO2) linkage. Phosphoserine is present on serine 116. Positions 119-140 are leucine-zipper; it reads LYSRDTGLPGCQSSLLRQDLGL. Lysine 181 participates in a covalent cross-link: Glycyl lysine isopeptide (Lys-Gly) (interchain with G-Cter in SUMO2). Residues 182–196 form an interaction with RUNX1T1 region; it reads KVRKVPPGLPSSVYA. The span at 282 to 306 shows a compositional bias: polar residues; that stretch reads VSPTDINTSLPPMSSFHRGSTSSSP. Threonine 313 carries the post-translational modification Phosphothreonine. Position 333 is a phosphoserine (serine 333). 2 disordered regions span residues 349–395 and 462–580; these read PDHT…SLHS and SASM…ERRM. Residues 352 to 363 show a composition bias toward low complexity; the sequence is TSSSFPSNPSTP. 2 stretches are compositionally biased toward polar residues: residues 364 to 376 and 383 to 395; these read VGSP…TSQW and APSS…SLHS. Residues 481–492 are compositionally biased toward low complexity; sequence SVLSSTVTTSST. The segment covering 506-517 has biased composition (polar residues); sequence LQSQSGTVVTTE. Basic and acidic residues-rich tracts occupy residues 518-530 and 536-551; these read IKTE…ENLH and DDMK…DIKV. A Glycyl lysine isopeptide (Lys-Gly) (interchain with G-Cter in SUMO2) cross-link involves residue lysine 519. Position 540 is a phosphoserine (serine 540). A Glycyl lysine isopeptide (Lys-Gly) (interchain with G-Cter in SUMO2) cross-link involves residue lysine 550. Threonine 557 is modified (phosphothreonine). Phosphoserine occurs at positions 558 and 559. Basic and acidic residues predominate over residues 568-580; sequence PEQKIEREKERRM. One can recognise a bHLH domain in the interval 577-630; the sequence is ERRMANNARERLRVRDINEAFKELGRMCQLHLKSEKPQTKLLILHQAVAVILSL. Glycyl lysine isopeptide (Lys-Gly) (interchain with G-Cter in SUMO2) cross-links involve residues lysine 609 and lysine 653. The segment at 632-655 is class A specific domain; the sequence is QQVRERNLNPKAACLKRREEEKVS. A disordered region spans residues 651 to 682; it reads EEKVSAVSAEPPTTLPGTHPGLSETTNPMGHM. Over residues 661–672 the composition is skewed to low complexity; that stretch reads PPTTLPGTHPGL. Residues 673-682 are compositionally biased toward polar residues; that stretch reads SETTNPMGHM.

Efficient DNA binding requires dimerization with another bHLH protein. Forms homo- or heterooligomers with myogenin, E12 and ITF2 proteins. Interacts with PTF1A. Interacts with NEUROD2. Interacts with RUNX1T1. Interacts with AML1-MTG8/ETO (via nervy homology region 2 in oligomerized form). Interacts with BHLHA9. Expressed in several tissues and cell types including skeletal muscle, thymus, and a B-cell line.

The protein localises to the nucleus. In terms of biological role, transcriptional regulator. Involved in the initiation of neuronal differentiation. Activates transcription by binding to the E box (5'-CANNTG-3'). May be involved in the functional network that regulates the development of the GnRH axis. This Homo sapiens (Human) protein is Transcription factor 12 (TCF12).